Reading from the N-terminus, the 497-residue chain is Chlorophyllide reductase 52.5 kDa chain (497 aa).

The next 3 helical transmembrane spans lie at 65-82, 126-142, and 216-233; these read VATVLCGSACCVYGLSFI, AIVVINLCVPTASGVPL, and MVIGAMLAPMGLAVGPTV.

Belongs to the BchN/ChlN family. As to quaternary structure, chlorophyllide reductase is composed of three subunits; BchX, BchY and BchZ. Forms a heterodimer of one BchY and one BchZ subunit.

It is found in the cell membrane. The enzyme catalyses 3-deacetyl-3-vinylbacteriochlorophyllide a + 2 oxidized [2Fe-2S]-[ferredoxin] + ADP + phosphate = chlorophyllide a + 2 reduced [2Fe-2S]-[ferredoxin] + ATP + H2O + H(+). It catalyses the reaction bacteriochlorophyllide a + 2 oxidized [2Fe-2S]-[ferredoxin] + ADP + phosphate = 3-acetyl-3-devinylchlorophyllide a + 2 reduced [2Fe-2S]-[ferredoxin] + ATP + H2O + H(+). The catalysed reaction is 3-deacetyl-3-(1-hydroxyethyl)bacteriochlorophyllide a + 2 oxidized [2Fe-2S]-[ferredoxin] + ADP + phosphate = 3-devinyl-3-(1-hydroxyethyl)chlorophyllide a + 2 reduced [2Fe-2S]-[ferredoxin] + ATP + H2O + H(+). The protein operates within porphyrin-containing compound metabolism; bacteriochlorophyll biosynthesis (light-independent). In terms of biological role, converts chlorophylls (Chl) into bacteriochlorophylls (BChl) by reducing ring B of the tetrapyrrole. This is Chlorophyllide reductase 52.5 kDa chain (bchY) from Rhodobacter capsulatus (strain ATCC BAA-309 / NBRC 16581 / SB1003).